A 381-amino-acid chain; its full sequence is Nitric oxide reductase FlRd-NAD(+) reductase (381 aa).

The protein belongs to the FAD-dependent oxidoreductase family. Requires FAD as cofactor.

Its subcellular location is the cytoplasm. The catalysed reaction is 2 reduced [nitric oxide reductase rubredoxin domain] + NAD(+) + H(+) = 2 oxidized [nitric oxide reductase rubredoxin domain] + NADH. It functions in the pathway nitrogen metabolism; nitric oxide reduction. One of at least two accessory proteins for anaerobic nitric oxide (NO) reductase. Reduces the rubredoxin moiety of NO reductase. This chain is Nitric oxide reductase FlRd-NAD(+) reductase, found in Aliivibrio fischeri (strain ATCC 700601 / ES114) (Vibrio fischeri).